We begin with the raw amino-acid sequence, 462 residues long: Chromosomal replication initiator protein DnaA (462 aa).

Positions 1-83 (MSLSLWQQCL…LRFEVGSKPA (83 aa)) are domain I, interacts with DnaA modulators. Residues 83–125 (AVRAHSHPVTASVSAPVAPVTRSAPVRPSWDSSPAQPELSYRS) form a domain II region. Positions 105 to 127 (SAPVRPSWDSSPAQPELSYRSNV) are disordered. A compositionally biased stretch (polar residues) spans 112 to 127 (WDSSPAQPELSYRSNV). A domain III, AAA+ region region spans residues 126-342 (NVNPKHTFDN…GALNRVIANA (217 aa)). Positions 170, 172, 173, and 174 each coordinate ATP. Residues 343–462 (NFTGRAITID…FSNLIRTLSS (120 aa)) are domain IV, binds dsDNA.

This sequence belongs to the DnaA family. Oligomerizes as a right-handed, spiral filament on DNA at oriC.

It is found in the cytoplasm. In terms of biological role, plays an essential role in the initiation and regulation of chromosomal replication. ATP-DnaA binds to the origin of replication (oriC) to initiate formation of the DNA replication initiation complex once per cell cycle. Binds the DnaA box (a 9 base pair repeat at the origin) and separates the double-stranded (ds)DNA. Forms a right-handed helical filament on oriC DNA; dsDNA binds to the exterior of the filament while single-stranded (ss)DNA is stabiized in the filament's interior. The ATP-DnaA-oriC complex binds and stabilizes one strand of the AT-rich DNA unwinding element (DUE), permitting loading of DNA polymerase. After initiation quickly degrades to an ADP-DnaA complex that is not apt for DNA replication. Binds acidic phospholipids. In Yersinia enterocolitica serotype O:8 / biotype 1B (strain NCTC 13174 / 8081), this protein is Chromosomal replication initiator protein DnaA.